The following is a 210-amino-acid chain: Uridine kinase (210 aa).

Residue 12 to 19 (GGSGGGKT) coordinates ATP.

This sequence belongs to the uridine kinase family.

It localises to the cytoplasm. The catalysed reaction is uridine + ATP = UMP + ADP + H(+). It catalyses the reaction cytidine + ATP = CMP + ADP + H(+). Its pathway is pyrimidine metabolism; CTP biosynthesis via salvage pathway; CTP from cytidine: step 1/3. It participates in pyrimidine metabolism; UMP biosynthesis via salvage pathway; UMP from uridine: step 1/1. The protein is Uridine kinase of Streptococcus gordonii (strain Challis / ATCC 35105 / BCRC 15272 / CH1 / DL1 / V288).